Here is a 56-residue protein sequence, read N- to C-terminus: Large ribosomal subunit protein bL32 (56 aa).

Positions 1–16 (MAVQKSKKSRSMRGMR) are enriched in basic residues. A disordered region spans residues 1–21 (MAVQKSKKSRSMRGMRRSHDA).

This sequence belongs to the bacterial ribosomal protein bL32 family.

The polypeptide is Large ribosomal subunit protein bL32 (Vibrio atlanticus (strain LGP32) (Vibrio splendidus (strain Mel32))).